The primary structure comprises 325 residues: ADP-ribose glycohydrolase MACROD1 (325 aa).

3 positions are modified to N6-succinyllysine: Lys96, Lys103, and Lys129. Lys138 participates in a covalent cross-link: Glycyl lysine isopeptide (Lys-Gly) (interchain with G-Cter in SUMO2). A Macro domain is found at 141–322 (EPRYKKDKQL…IYRSRLPHYF (182 aa)). 159–161 (SDI) lines the substrate pocket. Position 163 is an N6-acetyllysine (Lys163). Substrate contacts are provided by residues 172–174 (AAN), 179–184 (GGGGVD), 267–273 (ISTGVFG), and Phe306.

Belongs to the MacroD-type family. MacroD1/2-like subfamily. Interacts with ESR1; Interacts in a manner that is estrogen independent but is enhanced by estrogen. Interacts (via macro domain) with AR.

It is found in the nucleus. It catalyses the reaction 3''-O-acetyl-ADP-D-ribose + H2O = ADP-D-ribose + acetate + H(+). It carries out the reaction 2''-O-acetyl-ADP-D-ribose + H2O = ADP-D-ribose + acetate + H(+). The catalysed reaction is 4-O-(ADP-D-ribosyl)-L-aspartyl-[protein] + H2O = L-aspartyl-[protein] + ADP-D-ribose + H(+). The enzyme catalyses 5-O-(ADP-D-ribosyl)-L-glutamyl-[protein] + H2O = L-glutamyl-[protein] + ADP-D-ribose + H(+). It catalyses the reaction alpha-NAD(+) + H2O = ADP-D-ribose + nicotinamide + H(+). Its activity is regulated as follows. Subject to competitive inhibition by the product ADP-ribose. In terms of biological role, removes ADP-ribose from aspartate and glutamate residues in proteins bearing a single ADP-ribose moiety. Inactive towards proteins bearing poly-ADP-ribose. Deacetylates O-acetyl-ADP ribose, a signaling molecule generated by the deacetylation of acetylated lysine residues in histones and other proteins. Plays a role in estrogen signaling. Binds to androgen receptor (AR) and amplifies the transactivation function of AR in response to androgen. May play an important role in carcinogenesis and/or progression of hormone-dependent cancers by feed-forward mechanism that activates ESR1 transactivation. Could be an ESR1 coactivator, providing a positive feedback regulatory loop for ESR1 signal transduction. Could be involved in invasive growth by down-regulating CDH1 in endometrial cancer cells. Enhances ESR1-mediated transcription activity. The protein is ADP-ribose glycohydrolase MACROD1 of Homo sapiens (Human).